A 277-amino-acid polypeptide reads, in one-letter code: Putative phosphoenolpyruvate synthase regulatory protein (277 aa).

157–164 serves as a coordination point for ADP; the sequence is GVSRCGKT.

The protein belongs to the pyruvate, phosphate/water dikinase regulatory protein family. PSRP subfamily.

The enzyme catalyses [pyruvate, water dikinase] + ADP = [pyruvate, water dikinase]-phosphate + AMP + H(+). It carries out the reaction [pyruvate, water dikinase]-phosphate + phosphate + H(+) = [pyruvate, water dikinase] + diphosphate. Its function is as follows. Bifunctional serine/threonine kinase and phosphorylase involved in the regulation of the phosphoenolpyruvate synthase (PEPS) by catalyzing its phosphorylation/dephosphorylation. This chain is Putative phosphoenolpyruvate synthase regulatory protein, found in Klebsiella pneumoniae subsp. pneumoniae (strain ATCC 700721 / MGH 78578).